We begin with the raw amino-acid sequence, 471 residues long: Protein translocase subunit SecF (471 aa).

Residues 1–29 are disordered; sequence MVSRAKVGAETTKGIDEPDRNDNTDDNGA. A compositionally biased stretch (basic and acidic residues) spans 13–23; it reads KGIDEPDRNDN. 6 consecutive transmembrane segments (helical) span residues 88 to 108, 211 to 231, 242 to 262, 267 to 287, 325 to 345, and 355 to 375; these read GGVI…TFGI, ITKK…LYIT, ALTT…LVGF, ATVI…VIVF, LISV…LGVG, and LVGI…LLVT. Positions 393-471 are disordered; sequence RRTLGSQVGK…TGKRNNVGRR (79 aa). Positions 415–431 are enriched in polar residues; it reads KPQNQAESCADASSQEG. Low complexity predominate over residues 448-460; that stretch reads PGVRPVRPTGTRR. The segment covering 461 to 471 has biased composition (basic residues); the sequence is PTGKRNNVGRR.

It belongs to the SecD/SecF family. SecF subfamily. As to quaternary structure, forms a complex with SecD. Part of the essential Sec protein translocation apparatus which comprises SecA, SecYEG and auxiliary proteins SecDF. Other proteins may also be involved.

The protein resides in the cell membrane. Its function is as follows. Part of the Sec protein translocase complex. Interacts with the SecYEG preprotein conducting channel. SecDF uses the proton motive force (PMF) to complete protein translocation after the ATP-dependent function of SecA. This is Protein translocase subunit SecF from Mycobacterium leprae (strain TN).